The chain runs to 737 residues: Ribosome-releasing factor 2, mitochondrial (737 aa).

Residues 1–36 (MLCNRLHKAAFAARLRPRLPATVASCRQVHNSDGTI) constitute a mitochondrion transit peptide. One can recognise a tr-type G domain in the interval 39–318 (KRIRNIGILA…SVLNFLPAPS (280 aa)). Residues 48–55 (AHIDAGKT), 112–116 (DTPGH), and 166–169 (NKMD) contribute to the GTP site.

It belongs to the TRAFAC class translation factor GTPase superfamily. Classic translation factor GTPase family. EF-G/EF-2 subfamily.

The protein resides in the mitochondrion. Functionally, mitochondrial GTPase that mediates the disassembly of ribosomes from messenger RNA at the termination of mitochondrial protein biosynthesis. Not involved in the GTP-dependent ribosomal translocation step during translation elongation. The sequence is that of Ribosome-releasing factor 2, mitochondrial from Anopheles gambiae (African malaria mosquito).